The sequence spans 338 residues: Lipoate-protein ligase A (338 aa).

One can recognise a BPL/LPL catalytic domain in the interval 29 to 216; that stretch reads PATQRVLFLW…AFFAHYGERV (188 aa). ATP-binding positions include Arg-71, 76 to 79, and Lys-134; that span reads GAVF. Lys-134 is a binding site for (R)-lipoate.

Belongs to the LplA family. Monomer.

Its subcellular location is the cytoplasm. The catalysed reaction is L-lysyl-[lipoyl-carrier protein] + (R)-lipoate + ATP = N(6)-[(R)-lipoyl]-L-lysyl-[lipoyl-carrier protein] + AMP + diphosphate + H(+). It functions in the pathway protein modification; protein lipoylation via exogenous pathway; protein N(6)-(lipoyl)lysine from lipoate: step 1/2. The protein operates within protein modification; protein lipoylation via exogenous pathway; protein N(6)-(lipoyl)lysine from lipoate: step 2/2. Its function is as follows. Catalyzes both the ATP-dependent activation of exogenously supplied lipoate to lipoyl-AMP and the transfer of the activated lipoyl onto the lipoyl domains of lipoate-dependent enzymes. The protein is Lipoate-protein ligase A of Escherichia fergusonii (strain ATCC 35469 / DSM 13698 / CCUG 18766 / IAM 14443 / JCM 21226 / LMG 7866 / NBRC 102419 / NCTC 12128 / CDC 0568-73).